A 164-amino-acid chain; its full sequence is Peptide deformylase (164 aa).

Residues C87 and H129 each coordinate Fe cation. Residue E130 is part of the active site. Residue H133 coordinates Fe cation.

Belongs to the polypeptide deformylase family. Fe(2+) serves as cofactor.

The catalysed reaction is N-terminal N-formyl-L-methionyl-[peptide] + H2O = N-terminal L-methionyl-[peptide] + formate. In terms of biological role, removes the formyl group from the N-terminal Met of newly synthesized proteins. Requires at least a dipeptide for an efficient rate of reaction. N-terminal L-methionine is a prerequisite for activity but the enzyme has broad specificity at other positions. This Thermotoga maritima (strain ATCC 43589 / DSM 3109 / JCM 10099 / NBRC 100826 / MSB8) protein is Peptide deformylase.